Reading from the N-terminus, the 321-residue chain is D-alanine--D-alanine ligase (321 aa).

Residues 121-315 form the ATP-grasp domain; that stretch reads RIWFLTNNIN…FTNLIEEIIK (195 aa). 147–199 contributes to the ATP binding site; sequence PMKRPYVIKPLTQGSSIGVEVIFAEDDFNFADYDFPYGDQVIIEQYIKGRELQ. Mg(2+) is bound by residues Glu-268, Glu-282, and Asn-284.

The protein belongs to the D-alanine--D-alanine ligase family. Mg(2+) serves as cofactor. Requires Mn(2+) as cofactor.

The protein resides in the cytoplasm. It carries out the reaction 2 D-alanine + ATP = D-alanyl-D-alanine + ADP + phosphate + H(+). It participates in cell wall biogenesis; peptidoglycan biosynthesis. Its function is as follows. Cell wall formation. The chain is D-alanine--D-alanine ligase from Rickettsia rickettsii (strain Iowa).